We begin with the raw amino-acid sequence, 98 residues long: DNA-binding protein Fis (98 aa).

Residues Gln-74–Lys-93 constitute a DNA-binding region (H-T-H motif).

Belongs to the transcriptional regulatory Fis family. Homodimer.

Functionally, activates ribosomal RNA transcription. Plays a direct role in upstream activation of rRNA promoters. The protein is DNA-binding protein Fis of Aliivibrio fischeri (strain ATCC 700601 / ES114) (Vibrio fischeri).